The primary structure comprises 516 residues: Cytochrome P450 monooxygenase dtxS2 (516 aa).

The chain crosses the membrane as a helical span at residues 23 to 43 (ILASVIVLLGLKVATILYTAF). N-linked (GlcNAc...) asparagine glycosylation is present at asparagine 187. Residues 229–249 (VLVPLLVFPYISWLLVWWLLS) form a helical membrane-spanning segment. Residue cysteine 458 participates in heme binding.

Belongs to the cytochrome P450 family. Requires heme as cofactor.

The protein localises to the membrane. It participates in secondary metabolite biosynthesis. Cytochrome P450 monooxygenase; part of the gene cluster that mediates the biosynthesis of destruxins, insecticidal cyclic hexadepsipeptides which induce flaccid paralysis and visceral muscle contraction in insects through targeting the calcium channels and vacuolar-type ATPases. The aldo-keto reductase dtxS3 converts alpha-ketoisocaproic acid from deaminated leucine into alpha-hydroxyisocaproic acid (HIC), which is the first substrate for destruxin assembly by dtxS1. L-aspartate decarboxylase dtxS4 converts aspartic acid into beta-alanine, the last substrate for the destruxin assembly line performed by dtxS1. The nonribosomal peptide synthetase dtxS1 synthesizes destruxins B and B2, whereas the cytochrome P450 monooxygenase dtxS2 is required to convert destruxin B into other destruxin derivatives, including destructins C, D, A and E. Destruxin E-diol (ED) is further produced in a non-enzymatic manner from destruxin E. Destruxins play an important role in virulence and escape from insect host immune defenses. The polypeptide is Cytochrome P450 monooxygenase dtxS2 (Metarhizium robertsii (strain ARSEF 23 / ATCC MYA-3075) (Metarhizium anisopliae (strain ARSEF 23))).